Here is a 546-residue protein sequence, read N- to C-terminus: Chaperonin GroEL (546 aa).

Residues 30–33 (TLGP), lysine 51, 87–91 (DGTTT), glycine 415, 479–481 (NAA), and aspartate 495 each bind ATP. Residues 526 to 546 (KKDEPAMPAGGGMGGMGGMDF) form a disordered region. The segment covering 534-546 (AGGGMGGMGGMDF) has biased composition (gly residues).

The protein belongs to the chaperonin (HSP60) family. As to quaternary structure, forms a cylinder of 14 subunits composed of two heptameric rings stacked back-to-back. Interacts with the co-chaperonin GroES.

It localises to the cytoplasm. The catalysed reaction is ATP + H2O + a folded polypeptide = ADP + phosphate + an unfolded polypeptide.. In terms of biological role, together with its co-chaperonin GroES, plays an essential role in assisting protein folding. The GroEL-GroES system forms a nano-cage that allows encapsulation of the non-native substrate proteins and provides a physical environment optimized to promote and accelerate protein folding. This Xanthomonas euvesicatoria pv. vesicatoria (strain 85-10) (Xanthomonas campestris pv. vesicatoria) protein is Chaperonin GroEL.